The sequence spans 449 residues: Glucose-6-phosphate isomerase (449 aa).

The Proton donor role is filled by Glu291. Catalysis depends on residues His312 and Lys426.

It belongs to the GPI family.

Its subcellular location is the cytoplasm. The enzyme catalyses alpha-D-glucose 6-phosphate = beta-D-fructose 6-phosphate. Its pathway is carbohydrate biosynthesis; gluconeogenesis. The protein operates within carbohydrate degradation; glycolysis; D-glyceraldehyde 3-phosphate and glycerone phosphate from D-glucose: step 2/4. Its function is as follows. Catalyzes the reversible isomerization of glucose-6-phosphate to fructose-6-phosphate. This Streptococcus pyogenes serotype M1 protein is Glucose-6-phosphate isomerase.